The sequence spans 947 residues: ATPase 10, plasma membrane-type (947 aa).

The Cytoplasmic segment spans residues M1–F69. The helical transmembrane segment at L70 to I89 threads the bilayer. Topologically, residues A90–W101 are extracellular. The helical transmembrane segment at E102–E122 threads the bilayer. Over N123–I251 the chain is Cytoplasmic. Residues G252–P272 traverse the membrane as a helical segment. Residues V273–G281 lie on the Extracellular side of the membrane. A helical membrane pass occupies residues I282–T299. Residues V300–R650 lie on the Cytoplasmic side of the membrane. The active-site 4-aspartylphosphate intermediate is D337. Residues D595 and D599 each coordinate Mg(2+). Residues N651–L672 traverse the membrane as a helical segment. The Extracellular segment spans residues I673–D677. A helical transmembrane segment spans residues F678–D700. At R701–I716 the chain is on the cytoplasmic side. Residues F717 to I737 traverse the membrane as a helical segment. Residues I738–E758 are Extracellular-facing. Residues Q759–T779 traverse the membrane as a helical segment. The Cytoplasmic portion of the chain corresponds to R780–G791. Residues T792–A812 form a helical membrane-spanning segment. The Extracellular portion of the chain corresponds to N813 to T820. The helical transmembrane segment at G821 to L841 threads the bilayer. Residues D842–V947 are Cytoplasmic-facing. Phosphoserine occurs at positions 897 and 929. T946 is subject to Phosphothreonine.

The protein belongs to the cation transport ATPase (P-type) (TC 3.A.3) family. Type IIIA subfamily. Found primarily in developing seeds. Expressed in guard cells, mesophyll cells, leaves and roots.

The protein resides in the membrane. It catalyses the reaction ATP + H2O + H(+)(in) = ADP + phosphate + 2 H(+)(out). Its function is as follows. The plasma membrane H(+) ATPase of plants and fungi generates a proton gradient that drives the active transport of nutrients by H(+)-symport. The resulting external acidification and/or internal alkinization may mediate growth responses. This is ATPase 10, plasma membrane-type (AHA10) from Arabidopsis thaliana (Mouse-ear cress).